An 88-amino-acid polypeptide reads, in one-letter code: Pape peptide (88 aa).

Residues 1–22 (MNRKTLLVIFFVTLLIAEEVNS) form the signal peptide. Positions 23 to 45 (FRLGGFLKKIWRSKLVKRLRSKG) are excised as a propeptide. The segment at 49 to 88 (LKEALAPEPAPEPAPEPAPEAAPEAAPEPAAAAPERRRRR) is disordered. A compositionally biased stretch (pro residues) spans 56–68 (EPAPEPAPEPAPE). PAPE repeat units lie at residues 57-60 (PAPE), 61-64 (PAPE), and 65-68 (PAPE). The span at 69 to 81 (AAPEAAPEPAAAA) shows a compositional bias: low complexity.

As to expression, expressed by the venom gland.

It localises to the secreted. The sequence is that of Pape peptide from Tityus serrulatus (Brazilian scorpion).